We begin with the raw amino-acid sequence, 120 residues long: NAD(P)H-quinone oxidoreductase subunit 3, chloroplastic (120 aa).

The next 3 helical transmembrane spans lie at 9–29, 64–84, and 88–108; these read IFWTFLIIASLIPILAFWISG, MFALVFVVFDVETVFLYPWAM, and VLGVSVFIEAFIFVLILVVGL.

This sequence belongs to the complex I subunit 3 family. In terms of assembly, NDH is composed of at least 16 different subunits, 5 of which are encoded in the nucleus.

Its subcellular location is the plastid. The protein localises to the chloroplast thylakoid membrane. It catalyses the reaction a plastoquinone + NADH + (n+1) H(+)(in) = a plastoquinol + NAD(+) + n H(+)(out). It carries out the reaction a plastoquinone + NADPH + (n+1) H(+)(in) = a plastoquinol + NADP(+) + n H(+)(out). In terms of biological role, NDH shuttles electrons from NAD(P)H:plastoquinone, via FMN and iron-sulfur (Fe-S) centers, to quinones in the photosynthetic chain and possibly in a chloroplast respiratory chain. The immediate electron acceptor for the enzyme in this species is believed to be plastoquinone. Couples the redox reaction to proton translocation, and thus conserves the redox energy in a proton gradient. The polypeptide is NAD(P)H-quinone oxidoreductase subunit 3, chloroplastic (Brachypodium distachyon (Purple false brome)).